Here is a 576-residue protein sequence, read N- to C-terminus: MPKTASRRREITQLLGKVDINFEDDIHMSIANDLFEAYGIPKLDSAEECINTAFPSLDQGVDTFRVEYLRAEILSKFDGHPLGIDTEAAAWEKFLAAEEGCRQTNERLSLVKYHDNSILSWGERVIHTARRKILKLIGESVPFGDVALRCRFSGGATTSVNRLHGHPSWKHACPQDVTKRAFKYLQAFKRACGDVVDLRVNEVRTSNKAVTVPKNSKTDRCIAIEPGWNMFFQLGVGAVLRDRLRLWKIDLNDQSTNQRLARDGSLLNHLATIDLSAASDSISLKLVELLMPPEWYDLLTDLRSDEGILPDGRVVTYEKISSMGNGYTFELESLIFAAIARSVCELLEIDQSTVSVYGDDIIIDTRAAAPLMDVFEYVGFTPNRKKTFCDGPFRESCGKHWFQGVDVTPFYIRRPIRCLADMILVLNSIYRWGTVDGIWDPRALTVYEKYLKLLPRNWRRNRIPDGYGDGALVGLATTNPFVIVKNYSRLYPVLVEVQRDVKRSEEGSYLYALLRDRETRYSPFLRDADRTGFDEAPLATSLRRKTGRYKVAWIQDSAFIRPPYLITGIPEVKLAS.

The region spanning 259–391 is the RdRp catalytic domain; the sequence is RLARDGSLLN…PNRKKTFCDG (133 aa). Asp274, Asp359, and Asp360 together coordinate Mg(2+).

Homodimer; the replicase complex can dimerize. Part of the viral RNA-dependent RNA polymerase complex, the other subunits are the host ribosomal protein S1, EF-Tu and EF-Ts. S1 is needed for the initiation of genomic RNA (+)-strand replication. The cofactor is Mg(2+).

The catalysed reaction is RNA(n) + a ribonucleoside 5'-triphosphate = RNA(n+1) + diphosphate. In terms of biological role, this is the catalytic subunit of the viral RNA-dependent RNA polymerase complex. This complex is involved in viral RNA replication that produces (+)-stranded genomes via a complementary, (-)-stranded intermediate. Binds RNA cooperatively with the host ribosomal protein S1. In Enterobacteria phage SP (Bacteriophage SP), this protein is RNA-directed RNA polymerase subunit beta.